The following is a 44-amino-acid chain: Small, acid-soluble spore protein P (44 aa).

Residues 1–44 (MSQTMSKNNREAKEKKGQPEPLSGSHKVKNRNHSRQKHHAHHDM) form a disordered region. Residues 8 to 18 (NNREAKEKKGQ) show a composition bias toward basic and acidic residues. A compositionally biased stretch (basic residues) spans 26-44 (HKVKNRNHSRQKHHAHHDM).

The protein belongs to the SspP family.

It is found in the spore core. The protein is Small, acid-soluble spore protein P of Bacillus cereus (strain ATCC 10987 / NRS 248).